The following is a 145-amino-acid chain: Superoxide dismutase [Mn/Fe] (145 aa).

Fe(3+) contacts are provided by histidine 10 and histidine 64. Residues histidine 10 and histidine 64 each contribute to the Mn(2+) site.

It belongs to the iron/manganese superoxide dismutase family. Mn(2+) serves as cofactor. It depends on Fe(3+) as a cofactor.

The catalysed reaction is 2 superoxide + 2 H(+) = H2O2 + O2. Destroys superoxide anion radicals which are normally produced within the cells and which are toxic to biological systems. Catalyzes the dismutation of superoxide anion radicals into O2 and H2O2 by successive reduction and oxidation of the transition metal ion at the active site. This chain is Superoxide dismutase [Mn/Fe] (sodA), found in Streptococcus parasanguinis.